We begin with the raw amino-acid sequence, 179 residues long: MAELATIARPYAEALFRVAEGGDIAAWSTLVQELAQVARLPEVLSVASSPKVTRTQVVELLLAAVKSPVAAGAEAKNFVQMLVDNHRIALLPEIAEQFEALKNEREGAADAEIVSAFPLNGADLESLVSGLERKFKRKLKPTVEVDSSLIGGVRVTVGDEVLDTSVRARLASMQAALTA.

This sequence belongs to the ATPase delta chain family. In terms of assembly, F-type ATPases have 2 components, F(1) - the catalytic core - and F(0) - the membrane proton channel. F(1) has five subunits: alpha(3), beta(3), gamma(1), delta(1), epsilon(1). F(0) has three main subunits: a(1), b(2) and c(10-14). The alpha and beta chains form an alternating ring which encloses part of the gamma chain. F(1) is attached to F(0) by a central stalk formed by the gamma and epsilon chains, while a peripheral stalk is formed by the delta and b chains.

It is found in the cell inner membrane. F(1)F(0) ATP synthase produces ATP from ADP in the presence of a proton or sodium gradient. F-type ATPases consist of two structural domains, F(1) containing the extramembraneous catalytic core and F(0) containing the membrane proton channel, linked together by a central stalk and a peripheral stalk. During catalysis, ATP synthesis in the catalytic domain of F(1) is coupled via a rotary mechanism of the central stalk subunits to proton translocation. Functionally, this protein is part of the stalk that links CF(0) to CF(1). It either transmits conformational changes from CF(0) to CF(1) or is implicated in proton conduction. The protein is ATP synthase subunit delta of Burkholderia ambifaria (strain ATCC BAA-244 / DSM 16087 / CCUG 44356 / LMG 19182 / AMMD) (Burkholderia cepacia (strain AMMD)).